The following is a 352-amino-acid chain: Blue-sensitive opsin (352 aa).

Topologically, residues 1 to 42 (MRGNRLVEFPDDFWIPIPLDTNNVTALSPFLVPQDHLGSPTI) are extracellular. A glycan (N-linked (GlcNAc...) asparagine) is linked at N23. The helical transmembrane segment at 43–67 (FYSMSALMFVLFVAGTAINLLTIAC) threads the bilayer. Residues 68 to 79 (TLQYKKLRSHLN) lie on the Cytoplasmic side of the membrane. A helical transmembrane segment spans residues 80–105 (YILVNMAVANLIVASTGSSTCFVCFA). Topologically, residues 106–119 (FKYMVLGPLGCKIE) are extracellular. C116 and C193 are disulfide-bonded. The helical transmembrane segment at 120–139 (GFTAALGGMVSLWSLAVIAF) threads the bilayer. Residues 140–158 (ERWLVICKPLGNFVFKSEH) are Cytoplasmic-facing. A helical transmembrane segment spans residues 159-182 (ALLCCALTWVCGLCASVPPLVGWS). The Extracellular portion of the chain corresponds to 183–208 (RYIPEGMQCSCGPDWYTTGNKFNNES). N-linked (GlcNAc...) asparagine glycosylation is present at N206. A helical membrane pass occupies residues 209–236 (FVMFLFCFCFAVPFSIIVFCYSQLLFTL). Residues 237-258 (KMAAKAQADSASTQKAEKEVTR) lie on the Cytoplasmic side of the membrane. A helical membrane pass occupies residues 259–282 (MVVVMVVAFLVCYVPYASFALWVI). The Extracellular segment spans residues 283-290 (NNRGQTFD). The chain crosses the membrane as a helical span at residues 291 to 315 (LRLATIPSCVSKASTVYNPVIYVLL). K302 bears the N6-(retinylidene)lysine mark. The Cytoplasmic portion of the chain corresponds to 316–352 (NKQFRLCMKKMLGMSADEDEESSTSQSTTEVSKVGPS). The interval 332-352 (DEDEESSTSQSTTEVSKVGPS) is disordered.

It belongs to the G-protein coupled receptor 1 family. Opsin subfamily. In terms of processing, phosphorylated on some or all of the serine and threonine residues present in the C-terminal region. The color pigments are found in the cone photoreceptor cells.

It is found in the membrane. In terms of biological role, visual pigments are the light-absorbing molecules that mediate vision. They consist of an apoprotein, opsin, covalently linked to cis-retinal. This is Blue-sensitive opsin from Oryzias latipes (Japanese rice fish).